The sequence spans 298 residues: Acetylglutamate kinase (298 aa).

Residues 69–70 (GG), Arg-91, and Asn-196 each bind substrate.

Belongs to the acetylglutamate kinase family. ArgB subfamily.

The protein resides in the cytoplasm. The enzyme catalyses N-acetyl-L-glutamate + ATP = N-acetyl-L-glutamyl 5-phosphate + ADP. It functions in the pathway amino-acid biosynthesis; L-arginine biosynthesis; N(2)-acetyl-L-ornithine from L-glutamate: step 2/4. Catalyzes the ATP-dependent phosphorylation of N-acetyl-L-glutamate. In Rhodopseudomonas palustris (strain BisB18), this protein is Acetylglutamate kinase.